Here is a 162-residue protein sequence, read N- to C-terminus: Disulfide bond formation protein B (162 aa).

The Cytoplasmic segment spans residues Met-1 to Ile-4. A helical membrane pass occupies residues Phe-5–Tyr-21. Residues Leu-22–Ile-39 are Periplasmic-facing. A disulfide bridge links Cys-31 with Cys-34. The chain crosses the membrane as a helical span at residues Ala-40–Pro-56. At Gln-57 to His-62 the chain is on the cytoplasmic side. Residues Ile-63–Gly-80 traverse the membrane as a helical segment. Topologically, residues Arg-81–Asp-136 are periplasmic. A disulfide bridge links Cys-94 with Cys-122. The chain crosses the membrane as a helical span at residues Trp-137–Lys-155. Residues Lys-156–Gln-162 lie on the Cytoplasmic side of the membrane.

The protein belongs to the DsbB family.

Its subcellular location is the cell inner membrane. In terms of biological role, required for disulfide bond formation in some periplasmic proteins. Acts by oxidizing the DsbA protein. The chain is Disulfide bond formation protein B from Nitrosomonas eutropha (strain DSM 101675 / C91 / Nm57).